The following is a 515-amino-acid chain: Recombining binding protein suppressor of hairless-like protein (515 aa).

A disordered region spans residues 1 to 40 (MDPRETTDPSLPPGPLTHLSLPDSSEVRLQSDGPSLLGSW). DNA-binding regions lie at residues 76 to 86 (QKSYGNEKRFF), 191 to 196 (SKPSQK), and 218 to 223 (RLRSQT). Positions 384-474 (PLISTLELSG…YPSPFSFTYT (91 aa)) constitute an IPT/TIG domain.

It belongs to the Su(H) family. As to quaternary structure, interacts weakly with EBNA2. Does not interact with any Notch proteins. As to expression, highly expressed in lung. Also detected in spleen, and brain.

It is found in the nucleus. Putative transcription factor, which cooperates with EBNA2 to activate transcription. The polypeptide is Recombining binding protein suppressor of hairless-like protein (Rbpjl) (Mus musculus (Mouse)).